The primary structure comprises 142 residues: NTF2-related export protein 2 (142 aa).

One can recognise an NTF2 domain in the interval 17-136 (AAEEFVNIYY…WKIASDCFRF (120 aa)).

In terms of assembly, associates with NXF1, NXF2, NXF3 and NXF5.

It localises to the nucleus. The protein resides in the cytoplasm. Regulator of protein export for NES-containing proteins. Also plays a role in mRNA nuclear export. This chain is NTF2-related export protein 2, found in Homo sapiens (Human).